The chain runs to 472 residues: UDP-glycosyltransferase 2 (472 aa).

UDP-alpha-D-glucose contacts are provided by residues Ser-283, 348–349, 366–374, and 388–391; these read WA, HCGWNSVLE, and YAEQ.

It belongs to the UDP-glycosyltransferase family. Highly expressed in roots. Expressed in leaves and stems.

In terms of biological role, glycosyltransferase that possesses isoflavonoids 4'-O- and 7-O-glucosyltransferase activities. Shows a successive glucosylation toward the acceptors producing their corresponding 4',7-O-diglucosides. Can use genistein, formononetin, daidzein, liquiritigenin and naringenin as substrates. Also shows a 3'-O-glucosylation activity in vitro. This is UDP-glycosyltransferase 2 from Pueraria montana var. lobata (Kudzu vine).